A 251-amino-acid chain; its full sequence is Ditrans,polycis-undecaprenyl-diphosphate synthase ((2E,6E)-farnesyl-diphosphate specific) (251 aa).

Asp-21 is an active-site residue. Asp-21 serves as a coordination point for Mg(2+). Substrate is bound by residues 22–25 (GNNR), Trp-26, His-38, and 66–68 (SSE). Asn-69 serves as the catalytic Proton acceptor. Substrate is bound by residues Trp-70, Arg-72, Arg-189, and 195 to 197 (RIS). Glu-208 serves as a coordination point for Mg(2+).

Belongs to the UPP synthase family. Homodimer. It depends on Mg(2+) as a cofactor.

It catalyses the reaction 8 isopentenyl diphosphate + (2E,6E)-farnesyl diphosphate = di-trans,octa-cis-undecaprenyl diphosphate + 8 diphosphate. In terms of biological role, catalyzes the sequential condensation of isopentenyl diphosphate (IPP) with (2E,6E)-farnesyl diphosphate (E,E-FPP) to yield (2Z,6Z,10Z,14Z,18Z,22Z,26Z,30Z,34E,38E)-undecaprenyl diphosphate (di-trans,octa-cis-UPP). UPP is the precursor of glycosyl carrier lipid in the biosynthesis of bacterial cell wall polysaccharide components such as peptidoglycan and lipopolysaccharide. This Pseudomonas syringae pv. tomato (strain ATCC BAA-871 / DC3000) protein is Ditrans,polycis-undecaprenyl-diphosphate synthase ((2E,6E)-farnesyl-diphosphate specific).